We begin with the raw amino-acid sequence, 269 residues long: Phycobilisome 37.5 kDa linker polypeptide, phycocyanin-associated, rod (269 aa).

A PBS-linker domain is found at Thr-2–Arg-177. One can recognise a CpcD-like domain in the interval Gly-217–Ala-269.

Belongs to the phycobilisome linker protein family.

It is found in the cellular thylakoid membrane. Rod linker protein, associated with phycocyanin. Linker polypeptides determine the state of aggregation and the location of the disk-shaped phycobiliprotein units within the phycobilisome and modulate their spectroscopic properties in order to mediate a directed and optimal energy transfer. In Microchaete diplosiphon (Fremyella diplosiphon), this protein is Phycobilisome 37.5 kDa linker polypeptide, phycocyanin-associated, rod (cpcH2).